Reading from the N-terminus, the 504-residue chain is MTLLRDLLLLYINSLLFINPSIGENILVFLPTKTYSHFKPLEPLFQELAMRGHNVTVFSGFSLTKNISNYSSIVFSAEIEFVNIGMGNLRKQSRIYNWIYVHNELQNYFTQLISDNQLQELLSNKDTQFDLIFIELYHVDGVFALSHRFNCPIIGLSFQPVLPIYNWLIGNPTTFSYIPHVYLPFTDIMSFWKRIINAVFSIFTAAFYNFVSTKGYQKHVDLLLRQTESPKLNIEELSESLSLILAEFHFSSAYTRPNLPNVIDIAGIHIQSPKPLPQDLLDFLDQSEHGVIYVSLGTLIDPIHTDHLGLNLINVFRKLRQRVIWKWKKEFFHDVPKNVLIGEWFPQIDILNHPRCKLFISHGGYHSMLESIYSSVPILGIPFFTDQHHNTAIIEKLKIGKKASTEASEEDLLTAVKELLSNETFKRNSQHQSSIFRDRPMSPMDTAIYWTEYILRYKGASHMKSAVIDLYWFQYILLDIILFYSLIVLILLCILRIFFRMLTK.

The first 23 residues, 1–23, serve as a signal peptide directing secretion; that stretch reads MTLLRDLLLLYINSLLFINPSIG. Residues 24-474 are Lumenal-facing; it reads ENILVFLPTK…SAVIDLYWFQ (451 aa). N-linked (GlcNAc...) asparagine glycans are attached at residues asparagine 54, asparagine 66, asparagine 69, and asparagine 422. Residues 475–495 form a helical membrane-spanning segment; sequence YILLDIILFYSLIVLILLCIL. The Cytoplasmic segment spans residues 496–504; it reads RIFFRMLTK.

This sequence belongs to the UDP-glycosyltransferase family.

The protein localises to the microsome membrane. Catalyzes the transfer of a glycosyl group from a UDP-sugar to an acceptor molecule. This Dactylopius coccus (Cochineal) protein is UDP-glycosyltransferase UGT4.